A 271-amino-acid polypeptide reads, in one-letter code: Diaminopimelate epimerase (271 aa).

The substrate site is built by asparagine 13, glutamine 46, and asparagine 66. The active-site Proton donor is cysteine 75. Substrate-binding positions include 76-77, asparagine 155, asparagine 188, and 206-207; these read GN and ER. The active-site Proton acceptor is cysteine 215. Substrate is bound at residue 216–217; that stretch reads GS.

Belongs to the diaminopimelate epimerase family. As to quaternary structure, homodimer.

Its subcellular location is the cytoplasm. The enzyme catalyses (2S,6S)-2,6-diaminopimelate = meso-2,6-diaminopimelate. The protein operates within amino-acid biosynthesis; L-lysine biosynthesis via DAP pathway; DL-2,6-diaminopimelate from LL-2,6-diaminopimelate: step 1/1. Functionally, catalyzes the stereoinversion of LL-2,6-diaminopimelate (L,L-DAP) to meso-diaminopimelate (meso-DAP), a precursor of L-lysine and an essential component of the bacterial peptidoglycan. The protein is Diaminopimelate epimerase of Vesicomyosocius okutanii subsp. Calyptogena okutanii (strain HA).